Here is a 434-residue protein sequence, read N- to C-terminus: Serine hydroxymethyltransferase (434 aa).

(6S)-5,6,7,8-tetrahydrofolate contacts are provided by residues Leu124 and 128-130; that span reads GHL. Lys233 is modified (N6-(pyridoxal phosphate)lysine). A (6S)-5,6,7,8-tetrahydrofolate-binding site is contributed by Glu249.

It belongs to the SHMT family. Homodimer. It depends on pyridoxal 5'-phosphate as a cofactor.

It is found in the cytoplasm. The catalysed reaction is (6R)-5,10-methylene-5,6,7,8-tetrahydrofolate + glycine + H2O = (6S)-5,6,7,8-tetrahydrofolate + L-serine. It functions in the pathway one-carbon metabolism; tetrahydrofolate interconversion. Its pathway is amino-acid biosynthesis; glycine biosynthesis; glycine from L-serine: step 1/1. Catalyzes the reversible interconversion of serine and glycine with tetrahydrofolate (THF) serving as the one-carbon carrier. This reaction serves as the major source of one-carbon groups required for the biosynthesis of purines, thymidylate, methionine, and other important biomolecules. Also exhibits THF-independent aldolase activity toward beta-hydroxyamino acids, producing glycine and aldehydes, via a retro-aldol mechanism. The polypeptide is Serine hydroxymethyltransferase (Synechococcus sp. (strain JA-3-3Ab) (Cyanobacteria bacterium Yellowstone A-Prime)).